A 354-amino-acid chain; its full sequence is CX3C chemokine receptor 1 (354 aa).

The Extracellular segment spans residues 1-32 (MSTSFPELDLENFEYDDSAEACYLGDIVAFGT). Residues 33 to 60 (IFLSVFYALVFTFGLVGNLLVVLALTNS) form a helical membrane-spanning segment. Topologically, residues 61-70 (RKPKSITDIY) are cytoplasmic. A helical membrane pass occupies residues 71–91 (LLNLALSDLLFVATLPFWTHY). At 92 to 104 (LISHEGLHNAMCK) the chain is on the extracellular side. A disulfide bond links Cys-103 and Cys-176. The helical transmembrane segment at 105–126 (LTTAFFFIGFFGGIFFITVISI) threads the bilayer. Residues 127-143 (DRYLAIVLAANSMNNRT) lie on the Cytoplasmic side of the membrane. The helical transmembrane segment at 144-168 (VQHGVTISLGVWAAAILVASPQFMF) threads the bilayer. The Extracellular portion of the chain corresponds to 169 to 196 (TKRKDNECLGDYPEVLQEMWPVLRNSEV). Residues 197–216 (NILGFALPLLIMSFCYFRII) traverse the membrane as a helical segment. Residues 217–232 (QTLFSCKNRKKARAVR) are Cytoplasmic-facing. A helical membrane pass occupies residues 233-257 (LILLVVFAFFLFWTPYNIMIFLETL). The Extracellular portion of the chain corresponds to 258–274 (KFYNFFPSCDMKRDLRL). A helical transmembrane segment spans residues 275-298 (ALSVTETVAFSHCCLNPFIYAFAG). Over 299–354 (EKFRRYLGHLYRKCLAVLCGHPVHTGFSPESQRSRQDSILSSFTHYTSEGDGSLLL) the chain is Cytoplasmic. A Phosphothreonine modification is found at Thr-345.

Belongs to the G-protein coupled receptor 1 family. Found in a ternary complex with CX3CL1 and ITGAV:ITGB3 or ITGA4:ITGB1. Post-translationally, this protein is not N-glycosylated which is unusual for G-protein-coupled receptors. As to expression, specifically expressed in subsets of leukocytes: expressed in monocytes, subsets of T-cells and natural killer (NK) cells in the circulation, dendritic cells, as well as in microglia in the central nervous system (CNS). Expression level subdivides blood monocytes into two major functional subsets; CD14(+)CD16(-)-CX3CR1(low) inflammatory monocytes and CD14(low)CD16(+)CX3CR1(high) homeostatic monocytes. Expressed in myeloid-derived mucosal dendritic cells, which populate the entire lamina propria of the small intestine.

Its subcellular location is the cell membrane. Functionally, receptor for the C-X3-C chemokine fractalkine (CX3CL1) present on many early leukocyte cells; CX3CR1-CX3CL1 signaling exerts distinct functions in different tissue compartments, such as immune response, inflammation, cell adhesion and chemotaxis. CX3CR1-CX3CL1 signaling mediates cell migratory functions. Responsible for the recruitment of natural killer (NK) cells to inflamed tissues. Acts as a regulator of inflammation process leading to atherogenesis by mediating macrophage and monocyte recruitment to inflamed atherosclerotic plaques, promoting cell survival. Involved in airway inflammation by promoting interleukin 2-producing T helper (Th2) cell survival in inflamed lung. Involved in the migration of circulating monocytes to non-inflamed tissues, where they differentiate into macrophages and dendritic cells. Acts as a negative regulator of angiogenesis, probably by promoting macrophage chemotaxis. Plays a key role in brain microglia by regulating inflammatory response in the central nervous system (CNS) and regulating synapse maturation. Required to restrain the microglial inflammatory response in the CNS and the resulting parenchymal damage in response to pathological stimuli. Involved in brain development by participating in synaptic pruning, a natural process during which brain microglia eliminates extra synapses during postnatal development. Synaptic pruning by microglia is required to promote the maturation of circuit connectivity during brain development. Acts as an important regulator of the gut microbiota by controlling immunity to intestinal bacteria and fungi. Expressed in lamina propria dendritic cells in the small intestine, which form transepithelial dendrites capable of taking up bacteria in order to provide defense against pathogenic bacteria. Required to initiate innate and adaptive immune responses against dissemination of commensal fungi (mycobiota) component of the gut: expressed in mononuclear phagocytes (MNPs) and acts by promoting induction of antifungal IgG antibodies response to confer protection against disseminated C.albicans or C.auris infection. Also acts as a receptor for C-C motif chemokine CCL26, inducing cell chemotaxis. This chain is CX3C chemokine receptor 1, found in Mus musculus (Mouse).